A 588-amino-acid chain; its full sequence is Acid beta-fructofuranosidase 1, vacuolar (588 aa).

Residues 1-31 (MDTSTSAYAPLPGEDPLFSGHPPASLRRSWK) lie on the Cytoplasmic side of the membrane. The propeptide at 1–115 (MDTSTSAYAP…LSYNWTNAMF (115 aa)) is removed in mature form. A helical; Signal-anchor for type II membrane protein membrane pass occupies residues 32-52 (GFAVIFASVLFLLSLVGLIIH). The Lumenal segment spans residues 53–588 (QGPQQPPDVM…LRALRKEVGR (536 aa)). Residues 57–86 (QPPDVMPDKQDEHHHPQSTTPASETTASWE) form a disordered region. The segment covering 62–71 (MPDKQDEHHH) has biased composition (basic and acidic residues). Polar residues predominate over residues 73 to 84 (QSTTPASETTAS). Residues 130–133 (WMND), Gln-149, and Trp-157 each bind substrate. The active site involves Asp-133. Asn-159 is a glycosylation site (N-linked (GlcNAc...) asparagine). Residue 192-193 (WS) coordinates substrate. N-linked (GlcNAc...) asparagine glycosylation is present at Asn-226. Residues 256-257 (RD), Glu-311, and Asp-344 contribute to the substrate site. The cysteines at positions 499 and 545 are disulfide-linked.

Belongs to the glycosyl hydrolase 32 family. As to quaternary structure, monomer. May be present in two forms, a 70 kDa monomer and a heterodimer of the 30 kDa and 38 kDa subunits. The ratio of the levels of the two forms within cells appears to be regulated developmentally. Glycosylated. In terms of tissue distribution, expressed in buds, stems, roots and leaves. Expressed in the epidermal cells of young leaves and of primordial leaves.

The protein resides in the membrane. Its subcellular location is the vacuole lumen. The enzyme catalyses Hydrolysis of terminal non-reducing beta-D-fructofuranoside residues in beta-D-fructofuranosides.. Acidic vacuolar invertase involved in light-induced bud burst. This Rosa hybrid cultivar protein is Acid beta-fructofuranosidase 1, vacuolar.